Consider the following 265-residue polypeptide: Mlc titration factor A (265 aa).

Zn(2+)-binding residues include His-111, His-148, His-152, and Glu-211.

Belongs to the MtfA family. As to quaternary structure, interacts with Mlc. Requires Zn(2+) as cofactor.

The protein localises to the cytoplasm. Its function is as follows. Involved in the modulation of the activity of the glucose-phosphotransferase system (glucose-PTS). Interacts with the transcriptional repressor Mlc, preventing its interaction with DNA and leading to the modulation of expression of genes regulated by Mlc, including ptsG, which encodes the PTS system glucose-specific EIICB component. Functionally, shows zinc-dependent metallopeptidase activity. The chain is Mlc titration factor A from Salmonella typhi.